The primary structure comprises 65 residues: MARRDDLTNKGPMSGNKRSHALNATKRKFNLNLQKILVTLENGSKVKIKVSAKTAKTLKKQGFVA.

The disordered stretch occupies residues 1–26; sequence MARRDDLTNKGPMSGNKRSHALNATK. The span at 17–26 shows a compositional bias: basic residues; that stretch reads KRSHALNATK.

This sequence belongs to the bacterial ribosomal protein bL28 family.

This chain is Large ribosomal subunit protein bL28, found in Mycoplasma mobile (strain ATCC 43663 / 163K / NCTC 11711) (Mesomycoplasma mobile).